Here is a 300-residue protein sequence, read N- to C-terminus: Cation-efflux pump FieF (300 aa).

4 consecutive transmembrane segments (helical) span residues 12–32, 39–59, 82–102, and 114–134; these read AAIA…FAWW, ILAA…NLLV, AALA…LTGI, and PGVG…LVSF. The Zn(2+) site is built by Asp-45 and Asp-49. Zn(2+)-binding residues include His-153 and Asp-157. The next 2 membrane-spanning stretches (helical) occupy residues 156–176 and 178–198; these read SDVM…YGWH and ADAL…LRMG.

It belongs to the cation diffusion facilitator (CDF) transporter (TC 2.A.4) family. FieF subfamily. In terms of assembly, homodimer.

It localises to the cell inner membrane. It catalyses the reaction Zn(2+)(in) + H(+)(out) = Zn(2+)(out) + H(+)(in). The catalysed reaction is Cd(2+)(in) + H(+)(out) = Cd(2+)(out) + H(+)(in). The enzyme catalyses Fe(2+)(in) + H(+)(out) = Fe(2+)(out) + H(+)(in). In terms of biological role, divalent metal cation transporter which exports Zn(2+), Cd(2+) and possibly Fe(2+). May be involved in zinc and iron detoxification by efflux. In Shigella flexneri serotype 5b (strain 8401), this protein is Cation-efflux pump FieF.